We begin with the raw amino-acid sequence, 75 residues long: Tautomerase PptA (75 aa).

The active-site Proton acceptor; via imino nitrogen is the Pro2.

Belongs to the 4-oxalocrotonate tautomerase family. PptA subfamily. Homodimer.

It localises to the cytoplasm. The polypeptide is Tautomerase PptA (Escherichia coli O127:H6 (strain E2348/69 / EPEC)).